The sequence spans 249 residues: Zinc finger protein mnm-2 (249 aa).

The interval 20–65 (PKEELETEEEDEEEDEEEELSSSEVTSENDMETESASSSASSVGQP) is disordered. Acidic residues predominate over residues 24–52 (LETEEEDEEEDEEEELSSSEVTSENDMET). C2H2-type zinc fingers lie at residues 168–190 (YRCDVCDKTFSRSNTLITHKRIH), 196–218 (FKCEHCGRAFRQPGNLTRHRLTH), and 224–246 (YVCGLCDKAFNRASNLHTHMRTH).

In terms of tissue distribution, in larva and adult, expressed in the M3 pharyngeal motor neurons, extrapharyngeal neurons in the head, the PQR tail neurons, rectal cells, vulva cells, the spermetheca-uterine valve, body wall muscle cells and neurons of the ventral nerve cord. In the embryo, expressed in pharyngeal cells, extrapharyngeal head neurons and within the tail. Expressed in body wall muscle cells during late embryonic stages. Expressed in the mother cells of the M2 and M3 pharyngeal motor neurons precursor cells at the embryonic bean stage and subsequently in the M2 and M3 cells as they are born. Expression is sustained only in the two M3 cells up to at least the 5-day-old adult. In contrast, expression gradually declines in the M2 cells beginning from the time of their birth, and is completely undetectable by the time of hatching.

It localises to the nucleus. In terms of biological role, required in the M3 pharyngeal motor neuron to guide the growth cone of the sister M2 motor neuron during axon development. The sequence is that of Zinc finger protein mnm-2 from Caenorhabditis elegans.